Consider the following 88-residue polypeptide: Small ribosomal subunit protein uS15 (88 aa).

The protein belongs to the universal ribosomal protein uS15 family. As to quaternary structure, part of the 30S ribosomal subunit. Forms a bridge to the 50S subunit in the 70S ribosome, contacting the 23S rRNA.

In terms of biological role, one of the primary rRNA binding proteins, it binds directly to 16S rRNA where it helps nucleate assembly of the platform of the 30S subunit by binding and bridging several RNA helices of the 16S rRNA. Forms an intersubunit bridge (bridge B4) with the 23S rRNA of the 50S subunit in the ribosome. The sequence is that of Small ribosomal subunit protein uS15 from Polaromonas sp. (strain JS666 / ATCC BAA-500).